A 419-amino-acid polypeptide reads, in one-letter code: Gustatory receptor for sugar taste 64c (419 aa).

Residues 1–15 lie on the Cytoplasmic side of the membrane; the sequence is MQQSGQKGTRNTLQH. A helical membrane pass occupies residues 16-36; sequence AIGPVLVIAQFFGVLPVAGVW. Residues 37–48 are Extracellular-facing; the sequence is PSCRPERVRFRW. Residues 49-69 traverse the membrane as a helical segment; it reads ISLSLLAALILFVFSIVDCAL. The Cytoplasmic portion of the chain corresponds to 70 to 82; the sequence is SSKVVFDHGLKIY. The chain crosses the membrane as a helical span at residues 83 to 103; it reads TIGSLSFSVICIFCFGVFLLL. Over 104-139 the chain is Extracellular; the sequence is SRRWPYIIRRTAECEQIFLEPEYDCSYGRGYSSRLR. The chain crosses the membrane as a helical span at residues 140–160; sequence LWGVCMLVAALCEHSTYVGSA. The Cytoplasmic portion of the chain corresponds to 161 to 204; it reads LYNNHLAIVECKLDANFWQNYFQRERQQLFLIMHFTAWWIPFIE. A helical transmembrane segment spans residues 205 to 225; the sequence is WTTLSMTFVWNFVDIFLILIC. Residues 226-305 lie on the Extracellular side of the membrane; sequence RGMQMRFQQM…FQSKGNYADE (80 aa). A helical transmembrane segment spans residues 306–326; that stretch reads LYFWFCLSYVIIRVLNMMFAA. Residues 327-377 are Cytoplasmic-facing; that stretch reads SSIPQEAKEISYTLYEIPTEFWCVELRRLNEIFLSDHFALSGKGYFLLTRR. Residues 378 to 398 traverse the membrane as a helical segment; that stretch reads LIFAMAATLMVYELVLINQMA. The Extracellular portion of the chain corresponds to 399–419; that stretch reads GSEVQKSFCEGGVGSSKSIFS.

It belongs to the insect chemoreceptor superfamily. Gustatory receptor (GR) family. Gr5a subfamily. In terms of tissue distribution, expressed in Gr5a-expressing sugar-sensing cells.

The protein localises to the cell membrane. Its function is as follows. One of the few identified sugar gustatory receptors identified so far and which promotes the starvation-induced increase of feeding motivation. The chain is Gustatory receptor for sugar taste 64c (Gr64c) from Drosophila melanogaster (Fruit fly).